The following is a 392-amino-acid chain: Antitrypsin (392 aa).

The first 16 residues, 1-16 (MKTIICLFTIAIAAMA), serve as a signal peptide directing secretion.

This sequence belongs to the serpin family. Hemolymph.

It is found in the secreted. In terms of biological role, may play a role in the prophenoloxidase activating system in the silkworm hemolymph. The protein is Antitrypsin of Bombyx mori (Silk moth).